A 557-amino-acid polypeptide reads, in one-letter code: Beta-amylase 2, chloroplastic (557 aa).

A chloroplast-targeting transit peptide spans 1–38 (MMSLNLAHQTGAAAAVAPAAPRTAVVAAAAGTVSAPAV). Positions 135, 175, and 183 each coordinate substrate. E267 (proton donor) is an active-site residue. Substrate contacts are provided by K380, H385, and T427. The Proton acceptor role is filled by E465. Substrate-binding positions include 466–467 (NA) and R499.

It belongs to the glycosyl hydrolase 14 family.

It localises to the plastid. Its subcellular location is the chloroplast. It catalyses the reaction Hydrolysis of (1-&gt;4)-alpha-D-glucosidic linkages in polysaccharides so as to remove successive maltose units from the non-reducing ends of the chains.. Possesses beta-amylase activity in vitro. May be involved in cold resistance by mediating the accumulation of maltose upon freezing stress, thus contributing to the protection of membranes. This Oryza sativa subsp. japonica (Rice) protein is Beta-amylase 2, chloroplastic.